The following is a 354-amino-acid chain: GTPase Obg (354 aa).

One can recognise an Obg domain in the interval 1 to 159 (MKFVDEVKIH…RDLVLELKLL (159 aa)). Residues 160–333 (ADVGIVGYPN…LLDAVGRALF (174 aa)) enclose the OBG-type G domain. Residues 166-173 (GYPNAGKS), 191-195 (FTTLT), 212-215 (DIPG), 283-286 (TKID), and 314-316 (SAV) each bind GTP. Positions 173 and 193 each coordinate Mg(2+).

It belongs to the TRAFAC class OBG-HflX-like GTPase superfamily. OBG GTPase family. In terms of assembly, monomer. Mg(2+) is required as a cofactor.

It localises to the cytoplasm. An essential GTPase which binds GTP, GDP and possibly (p)ppGpp with moderate affinity, with high nucleotide exchange rates and a fairly low GTP hydrolysis rate. Plays a role in control of the cell cycle, stress response, ribosome biogenesis and in those bacteria that undergo differentiation, in morphogenesis control. In Anaeromyxobacter sp. (strain K), this protein is GTPase Obg.